The following is a 177-amino-acid chain: Large ribosomal subunit protein uL6 (177 aa).

Belongs to the universal ribosomal protein uL6 family. Part of the 50S ribosomal subunit.

In terms of biological role, this protein binds to the 23S rRNA, and is important in its secondary structure. It is located near the subunit interface in the base of the L7/L12 stalk, and near the tRNA binding site of the peptidyltransferase center. The chain is Large ribosomal subunit protein uL6 from Buchnera aphidicola subsp. Acyrthosiphon kondoi (Acyrthosiphon kondoi symbiotic bacterium).